Here is a 414-residue protein sequence, read N- to C-terminus: Gamma-glutamyl phosphate reductase (414 aa).

This sequence belongs to the gamma-glutamyl phosphate reductase family.

It is found in the cytoplasm. The catalysed reaction is L-glutamate 5-semialdehyde + phosphate + NADP(+) = L-glutamyl 5-phosphate + NADPH + H(+). Its pathway is amino-acid biosynthesis; L-proline biosynthesis; L-glutamate 5-semialdehyde from L-glutamate: step 2/2. Functionally, catalyzes the NADPH-dependent reduction of L-glutamate 5-phosphate into L-glutamate 5-semialdehyde and phosphate. The product spontaneously undergoes cyclization to form 1-pyrroline-5-carboxylate. The protein is Gamma-glutamyl phosphate reductase of Thermoanaerobacter sp. (strain X514).